The primary structure comprises 567 residues: uncharacterized protein (567 aa).

A disordered region spans residues 1-26 (MPSEKATTRHLPGAVETLSPRTGRRP). The next 6 membrane-spanning stretches (helical) occupy residues 57-77 (AILV…TVAF), 90-110 (VSFG…TYWL), 142-162 (VALA…IIYG), 173-193 (LFSM…LTEF), 221-241 (MLVW…TAIF), and 257-277 (VLIL…ILAW). Residues 278-329 (LTATPVRVVREALNRVEQGDLSGDLVVFDGTELGELQRGFNRMVEGLRERER) form the HAMP domain. The Guanylate cyclase domain maps to 361–485 (AVVFVDIVGS…EPVNEAARLC (125 aa)).

The protein belongs to the adenylyl cyclase class-3 family.

The protein localises to the cell membrane. This is an uncharacterized protein from Mycobacterium tuberculosis (strain ATCC 25618 / H37Rv).